Consider the following 932-residue polypeptide: Alanine--tRNA ligase, mitochondrial (932 aa).

A disordered region spans residues 458-480 (SRLTWNTSSSSSDQTTQQTTQLP). The span at 464-478 (TSSSSSDQTTQQTTQ) shows a compositional bias: low complexity. Zn(2+)-binding residues include His610, His614, Cys713, and His717.

The protein belongs to the class-II aminoacyl-tRNA synthetase family. Monomer. Requires Zn(2+) as cofactor.

It is found in the mitochondrion. The enzyme catalyses tRNA(Ala) + L-alanine + ATP = L-alanyl-tRNA(Ala) + AMP + diphosphate. Functionally, catalyzes the attachment of alanine to tRNA(Ala) in a two-step reaction: alanine is first activated by ATP to form Ala-AMP and then transferred to the acceptor end of tRNA(Ala). Also edits incorrectly charged tRNA(Ala) via its editing domain. The protein is Alanine--tRNA ligase, mitochondrial (malaS) of Dictyostelium discoideum (Social amoeba).